Reading from the N-terminus, the 158-residue chain is Heavy metal-associated isoprenylated plant protein 23 (158 aa).

Residues 31 to 94 (FQTVELKVRM…KAKATGKKAE (64 aa)) form the HMA domain. Residues cysteine 42 and cysteine 45 each coordinate a metal cation. Cysteine 155 carries the post-translational modification Cysteine methyl ester. Cysteine 155 is lipidated: S-farnesyl cysteine. Positions 156–158 (SIM) are cleaved as a propeptide — removed in mature form.

It belongs to the HIPP family. As to quaternary structure, interacts with ZHD11/HB29.

In terms of biological role, heavy-metal-binding protein. The protein is Heavy metal-associated isoprenylated plant protein 23 of Arabidopsis thaliana (Mouse-ear cress).